The following is a 60-amino-acid chain: Large ribosomal subunit protein eL37 (60 aa).

Positions 19, 22, 34, and 37 each coordinate Zn(2+). The C4-type zinc finger occupies 19-37 (CRRCGRISFHAQKKVCSSC).

The protein belongs to the eukaryotic ribosomal protein eL37 family. Requires Zn(2+) as cofactor.

Functionally, binds to the 23S rRNA. This is Large ribosomal subunit protein eL37 from Methanoregula boonei (strain DSM 21154 / JCM 14090 / 6A8).